A 913-amino-acid chain; its full sequence is Alanine--tRNA ligase (913 aa).

Positions 608, 612, 711, and 715 each coordinate Zn(2+).

It belongs to the class-II aminoacyl-tRNA synthetase family. Zn(2+) serves as cofactor.

The protein localises to the cytoplasm. It carries out the reaction tRNA(Ala) + L-alanine + ATP = L-alanyl-tRNA(Ala) + AMP + diphosphate. In terms of biological role, catalyzes the attachment of alanine to tRNA(Ala) in a two-step reaction: alanine is first activated by ATP to form Ala-AMP and then transferred to the acceptor end of tRNA(Ala). Also edits incorrectly charged Ser-tRNA(Ala) and Gly-tRNA(Ala) via its editing domain. This is Alanine--tRNA ligase from Methanocorpusculum labreanum (strain ATCC 43576 / DSM 4855 / Z).